Here is a 340-residue protein sequence, read N- to C-terminus: Glycerol-3-phosphate dehydrogenase [NAD(P)+] (340 aa).

NADPH-binding residues include Ser15, Tyr16, His36, and Lys110. Lys110, Gly139, and Thr141 together coordinate sn-glycerol 3-phosphate. Ala143 serves as a coordination point for NADPH. Lys196, Asp249, Ser259, Arg260, and Asn261 together coordinate sn-glycerol 3-phosphate. Lys196 acts as the Proton acceptor in catalysis. Arg260 is an NADPH binding site. NADPH is bound by residues Val284 and Glu286.

The protein belongs to the NAD-dependent glycerol-3-phosphate dehydrogenase family.

The protein localises to the cytoplasm. It catalyses the reaction sn-glycerol 3-phosphate + NAD(+) = dihydroxyacetone phosphate + NADH + H(+). The catalysed reaction is sn-glycerol 3-phosphate + NADP(+) = dihydroxyacetone phosphate + NADPH + H(+). It participates in membrane lipid metabolism; glycerophospholipid metabolism. Its function is as follows. Catalyzes the reduction of the glycolytic intermediate dihydroxyacetone phosphate (DHAP) to sn-glycerol 3-phosphate (G3P), the key precursor for phospholipid synthesis. This Serratia marcescens protein is Glycerol-3-phosphate dehydrogenase [NAD(P)+].